We begin with the raw amino-acid sequence, 217 residues long: Adenylate kinase (217 aa).

ATP is bound at residue 10–15 (GIGKGT). An NMP region spans residues 30–59 (STGDIFRKNFKENTELGTLSKKFIAQGLLV). AMP contacts are provided by residues Thr31, Arg36, 57–59 (LLV), 85–88 (GFPR), and Gln92. The tract at residues 126-163 (GRRICPECGKVYHIEKIPPKNPGICDKDQKTLIQREDD) is LID. ATP is bound at residue Arg127. Zn(2+) contacts are provided by Cys130 and Cys133. 136 to 137 (VY) serves as a coordination point for ATP. Residues Cys150 and Asp153 each coordinate Zn(2+). AMP is bound by residues Arg160 and Arg171. Residue Gln199 participates in ATP binding.

It belongs to the adenylate kinase family. As to quaternary structure, monomer.

The protein resides in the cytoplasm. It catalyses the reaction AMP + ATP = 2 ADP. It participates in purine metabolism; AMP biosynthesis via salvage pathway; AMP from ADP: step 1/1. In terms of biological role, catalyzes the reversible transfer of the terminal phosphate group between ATP and AMP. Plays an important role in cellular energy homeostasis and in adenine nucleotide metabolism. The chain is Adenylate kinase from Aster yellows witches'-broom phytoplasma (strain AYWB).